Here is a 631-residue protein sequence, read N- to C-terminus: uncharacterized protein (631 aa).

A run of 9 helical transmembrane segments spans residues 42 to 62 (VLVG…IGGF), 76 to 96 (ALKL…GTLL), 106 to 128 (VLGL…GPAP), 152 to 172 (AGLT…GWLW), 344 to 364 (ALKY…FGFA), 366 to 386 (SYWI…VFTL), 398 to 418 (IGVI…YIAF), 429 to 449 (MLIV…ALVI), and 464 to 484 (IARL…TMLL).

Belongs to the YccS/YhfK family.

The protein localises to the cell membrane. This is an uncharacterized protein from Bacillus subtilis (strain 168).